We begin with the raw amino-acid sequence, 414 residues long: tRNA(Ile)-lysidine synthase (414 aa).

17–22 (SGGCDS) serves as a coordination point for ATP.

Belongs to the tRNA(Ile)-lysidine synthase family.

The protein resides in the cytoplasm. It carries out the reaction cytidine(34) in tRNA(Ile2) + L-lysine + ATP = lysidine(34) in tRNA(Ile2) + AMP + diphosphate + H(+). Its function is as follows. Ligates lysine onto the cytidine present at position 34 of the AUA codon-specific tRNA(Ile) that contains the anticodon CAU, in an ATP-dependent manner. Cytidine is converted to lysidine, thus changing the amino acid specificity of the tRNA from methionine to isoleucine. In Exiguobacterium sibiricum (strain DSM 17290 / CCUG 55495 / CIP 109462 / JCM 13490 / 255-15), this protein is tRNA(Ile)-lysidine synthase.